We begin with the raw amino-acid sequence, 797 residues long: Adhesion G-protein coupled receptor G7 (797 aa).

The signal sequence occupies residues 1–26 (MASCRAWNLRVLVAVVCGLLTGIILG). The Extracellular portion of the chain corresponds to 27 to 438 (LGIWRIVIRI…QYPKSLDILS (412 aa)). N-linked (GlcNAc...) asparagine glycans are attached at residues Asn-82, Asn-159, Asn-178, Asn-191, Asn-247, Asn-261, Asn-312, Asn-316, and Asn-387. The GAIN-B domain occupies 275–428 (FSVQKGASSS…AVLMTFKKDY (154 aa)). Intrachain disulfides connect Cys-383–Cys-410 and Cys-398–Cys-412. The segment at 383–428 (CVYWNLSAKDWDTYGCQKDKGTDGFLRCRCNHTTNFAVLMTFKKDY) is GPS. N-linked (GlcNAc...) asparagine glycosylation is present at Asn-413. Residues 439–459 (NVGCALSVTGLALTVIFQIVT) traverse the membrane as a helical segment. Residues 460–468 (RKVRKTSVT) are Cytoplasmic-facing. Residues 469–489 (WVLVNLCISMLIFNLLFVFGI) form a helical membrane-spanning segment. The Extracellular portion of the chain corresponds to 490–528 (ENSNKNLQTSDGDINNIDFDNNDIPRTDTINIPNPMCTA). A helical membrane pass occupies residues 529 to 549 (IAALLHYFLLVTFTWNALSAA). Over 550-565 (QLYYLLIRTMKPLPRH) the chain is Cytoplasmic. The helical transmembrane segment at 566-586 (FILFISLIGWGVPAIVVAITV) threads the bilayer. Topologically, residues 587–623 (GVIYSQNGNNPQWELDYRQEKICWLAIPEPNGVIKSP) are extracellular. The chain crosses the membrane as a helical span at residues 624–644 (LLWSFIVPVTIILISNVVMFI). Residues 645–669 (TISIKVLWKNNQNLTSTKKVSSMKK) lie on the Cytoplasmic side of the membrane. Residues 670-690 (IVSTLSVAVVFGITWILAYLM) form a helical membrane-spanning segment. At 691–698 (LVNDDSIR) the chain is on the extracellular side. A helical membrane pass occupies residues 699 to 719 (IVFSYIFCLFNTTQGLQIFIL). The Cytoplasmic portion of the chain corresponds to 720-797 (YTVRTKVFQS…SESDNAKESI (78 aa)).

The protein belongs to the G-protein coupled receptor 2 family. Adhesion G-protein coupled receptor (ADGR) subfamily.

Its subcellular location is the membrane. Functionally, orphan receptor. This Homo sapiens (Human) protein is Adhesion G-protein coupled receptor G7 (ADGRG7).